Here is a 203-residue protein sequence, read N- to C-terminus: Ribosomal RNA small subunit methyltransferase G (203 aa).

Residues glycine 73, leucine 78, 124–125 (VE), and arginine 138 each bind S-adenosyl-L-methionine.

The protein belongs to the methyltransferase superfamily. RNA methyltransferase RsmG family.

Its subcellular location is the cytoplasm. It catalyses the reaction guanosine(527) in 16S rRNA + S-adenosyl-L-methionine = N(7)-methylguanosine(527) in 16S rRNA + S-adenosyl-L-homocysteine. Its function is as follows. Specifically methylates the N7 position of guanine in position 527 of 16S rRNA. The polypeptide is Ribosomal RNA small subunit methyltransferase G (Glaesserella parasuis serovar 5 (strain SH0165) (Haemophilus parasuis)).